The primary structure comprises 71 residues: Large ribosomal subunit protein uL29 (71 aa).

This sequence belongs to the universal ribosomal protein uL29 family.

This chain is Large ribosomal subunit protein uL29, found in Rickettsia akari (strain Hartford).